Reading from the N-terminus, the 293-residue chain is Signal recognition particle receptor FtsY (293 aa).

GTP-binding positions include 93-100 (GVNGAGKT), 175-179 (DTAGR), and 239-242 (TKLD).

The protein belongs to the GTP-binding SRP family. FtsY subfamily. Part of the signal recognition particle protein translocation system, which is composed of SRP and FtsY. SRP is a ribonucleoprotein composed of Ffh and a 4.5S RNA molecule.

It localises to the cell inner membrane. Its subcellular location is the cytoplasm. It carries out the reaction GTP + H2O = GDP + phosphate + H(+). Functionally, involved in targeting and insertion of nascent membrane proteins into the cytoplasmic membrane. Acts as a receptor for the complex formed by the signal recognition particle (SRP) and the ribosome-nascent chain (RNC). Interaction with SRP-RNC leads to the transfer of the RNC complex to the Sec translocase for insertion into the membrane, the hydrolysis of GTP by both Ffh and FtsY, and the dissociation of the SRP-FtsY complex into the individual components. The chain is Signal recognition particle receptor FtsY from Helicobacter pylori (strain ATCC 700392 / 26695) (Campylobacter pylori).